The sequence spans 188 residues: Elongation factor P (188 aa).

The protein belongs to the elongation factor P family.

It localises to the cytoplasm. Its pathway is protein biosynthesis; polypeptide chain elongation. Its function is as follows. Involved in peptide bond synthesis. Stimulates efficient translation and peptide-bond synthesis on native or reconstituted 70S ribosomes in vitro. Probably functions indirectly by altering the affinity of the ribosome for aminoacyl-tRNA, thus increasing their reactivity as acceptors for peptidyl transferase. This is Elongation factor P from Bacteroides fragilis (strain ATCC 25285 / DSM 2151 / CCUG 4856 / JCM 11019 / LMG 10263 / NCTC 9343 / Onslow / VPI 2553 / EN-2).